The primary structure comprises 252 residues: Acyl-coenzyme A diphosphatase FITM2 (252 aa).

Residues 1–25 (MAAAVAGSLVDKLVCLWRQPYTRIY) lie on the Cytoplasmic side of the membrane. The chain crosses the membrane as a helical span at residues 26-46 (LPHLFFCISLVGSVLKNAELV). Residues 47–59 (PESYFSSSRNVLN) lie on the Lumenal side of the membrane. Residues 60–80 (LYFVKVSWGWTIVLLLPFIAY) form a helical membrane-spanning segment. Topologically, residues 81–94 (SNFYIKSHMFALRR) are cytoplasmic. Residues 95 to 115 (LTSLLVATLVWYICTETFFYI) traverse the membrane as a helical segment. Topologically, residues 116 to 156 (EDITGSCYESNTMVVIRGEFDTKAACRKAGFFWDGFDISGH) are lumenal. The active site involves His156. Residues 157–177 (SFILSYSSLVIMEEMVPMLHI) traverse the membrane as a helical segment. The Cytoplasmic segment spans residues 178-190 (QPAYRNPPLDCLY). Residues 191-211 (LALNVIVAIWIWMFGCTSVYF) traverse the membrane as a helical segment. His212 is a catalytic residue. At 212-223 (HDIIDKILGTSC) the chain is on the lumenal side. The helical transmembrane segment at 224-244 (GILGWYMTYKVWYVKLFSPGL) threads the bilayer. Topologically, residues 245–252 (PPQPKQHT) are cytoplasmic.

It belongs to the FIT family. FIT2 subfamily. In terms of tissue distribution, widely expressed.

It localises to the endoplasmic reticulum membrane. It catalyses the reaction an acyl-CoA + H2O = an acyl-4'-phosphopantetheine + adenosine 3',5'-bisphosphate + 2 H(+). In terms of biological role, fatty acyl-coenzyme A (CoA) diphosphatase that hydrolyzes fatty acyl-CoA to yield acyl-4'-phosphopantetheine and adenosine 3',5'-bisphosphate. Preferentially hydrolyzes unsaturated long-chain acyl-CoA substrates in the endoplasmic reticulum (ER) lumen. This catalytic activity is required for maintaining ER structure and for lipid droplets (LDs) biogenesis, which are lipid storage organelles involved in maintaining lipid and energy homeostasis. Required for lipid droplet accumulation in liver and intestine during embryogenesis. May directly bind to diacylglycerol (DAGs) and triacylglycerol, which is also important for LD biogenesis. May support directional budding of nacent LDs from the ER into the cytosol by reducing DAG levels at sites of LD formation. May play a role in the regulation of cell morphology, ER morphology and cytoskeletal organization. The protein is Acyl-coenzyme A diphosphatase FITM2 of Danio rerio (Zebrafish).